We begin with the raw amino-acid sequence, 459 residues long: Cysteine--tRNA ligase (459 aa).

Cys-28 contacts Zn(2+). The short motif at 30–40 (VTIYDLCHIGH) is the 'HIGH' region element. Zn(2+) is bound by residues Cys-209, His-234, and Glu-238. Residues 266–270 (KMSKS) carry the 'KMSKS' region motif. Lys-269 contacts ATP.

The protein belongs to the class-I aminoacyl-tRNA synthetase family. In terms of assembly, monomer. Requires Zn(2+) as cofactor.

It localises to the cytoplasm. It carries out the reaction tRNA(Cys) + L-cysteine + ATP = L-cysteinyl-tRNA(Cys) + AMP + diphosphate. The protein is Cysteine--tRNA ligase of Shewanella baltica (strain OS155 / ATCC BAA-1091).